A 307-amino-acid polypeptide reads, in one-letter code: Pseudouridine-5'-phosphate glycosidase (307 aa).

The active-site Proton donor is glutamate 28. 2 residues coordinate substrate: lysine 89 and valine 109. Aspartate 141 contributes to the Mn(2+) binding site. Residue 143–145 (SAD) participates in substrate binding. Catalysis depends on lysine 162, which acts as the Nucleophile.

Belongs to the pseudouridine-5'-phosphate glycosidase family. As to quaternary structure, homotrimer. Mn(2+) serves as cofactor.

The catalysed reaction is D-ribose 5-phosphate + uracil = psi-UMP + H2O. Functionally, catalyzes the reversible cleavage of pseudouridine 5'-phosphate (PsiMP) to ribose 5-phosphate and uracil. Functions biologically in the cleavage direction, as part of a pseudouridine degradation pathway. The sequence is that of Pseudouridine-5'-phosphate glycosidase from Nocardioides sp. (strain ATCC BAA-499 / JS614).